We begin with the raw amino-acid sequence, 122 residues long: Large ribosomal subunit protein uL14 (122 aa).

The protein belongs to the universal ribosomal protein uL14 family. As to quaternary structure, part of the 50S ribosomal subunit. Forms a cluster with proteins L3 and L19. In the 70S ribosome, L14 and L19 interact and together make contacts with the 16S rRNA in bridges B5 and B8.

Functionally, binds to 23S rRNA. Forms part of two intersubunit bridges in the 70S ribosome. This chain is Large ribosomal subunit protein uL14, found in Brevibacillus brevis (strain 47 / JCM 6285 / NBRC 100599).